We begin with the raw amino-acid sequence, 262 residues long: Small ribosomal subunit protein uS2 (262 aa).

A disordered region spans residues 224–246 (GNQGEDQDDAQEQQVAADKKADS).

It belongs to the universal ribosomal protein uS2 family.

The protein is Small ribosomal subunit protein uS2 of Lacticaseibacillus casei (strain BL23) (Lactobacillus casei).